The following is a 261-amino-acid chain: Small ribosomal subunit protein eS1 (261 aa).

Over residues 1 to 18 the composition is skewed to basic residues; sequence MAVGKNKRISKGKKGGKK. Residues 1–23 are disordered; that stretch reads MAVGKNKRISKGKKGGKKKAADP.

It belongs to the eukaryotic ribosomal protein eS1 family. Component of the small ribosomal subunit. Mature ribosomes consist of a small (40S) and a large (60S) subunit. The 40S subunit contains about 33 different proteins and 1 molecule of RNA (18S). The 60S subunit contains about 49 different proteins and 3 molecules of RNA (25S, 5.8S and 5S).

Its subcellular location is the cytoplasm. This is Small ribosomal subunit protein eS1 (cyc07) from Nicotiana tabacum (Common tobacco).